An 815-amino-acid polypeptide reads, in one-letter code: Serotype-specific mannosyltransferase WbdA (815 aa).

The segment at 1–374 (MSRAIIENAG…WANTAHLAIE (374 aa)) is alpha-(1-&gt;2)-mannosyltransferase. Positions 431 to 804 (KLLVDISVLA…WKQSAEFLLK (374 aa)) are alpha-(1-&gt;3)-mannosyltransferase.

The protein belongs to the glycosyltransferase group 1 family. Glycosyltransferase 4 subfamily. As to quaternary structure, monomer. Interacts with the C-terminal region of WbdD.

Its subcellular location is the cell inner membrane. It carries out the reaction [alpha-D-Man-(1-&gt;3)-alpha-D-Man-(1-&gt;3)-alpha-D-Man-(1-&gt;2)-alpha-D-Man-(1-&gt;2)](n)-alpha-D-Man-(1-&gt;3)-alpha-D-Man-(1-&gt;3)-alpha-D-Man-(1-&gt;3)-alpha-D-GlcNAc-di-trans,octa-cis-undecaprenyl diphosphate + 2 GDP-alpha-D-mannose = alpha-D-Man-(1-&gt;2)-alpha-D-Man-(1-&gt;2)-[alpha-D-Man-(1-&gt;3)-alpha-D-Man-(1-&gt;3)-alpha-D-Man-(1-&gt;2)-alpha-D-Man-(1-&gt;2)](n)-alpha-D-Man-(1-&gt;3)-alpha-D-Man-(1-&gt;3)-alpha-D-Man-(1-&gt;3)-alpha-D-GlcNAc-di-trans,octa-cis-undecaprenyl diphosphate + 2 GDP + 2 H(+). The catalysed reaction is alpha-D-Man-(1-&gt;2)-alpha-D-Man-(1-&gt;2)-[alpha-D-Man-(1-&gt;3)-alpha-D-Man-(1-&gt;3)-alpha-D-Man-(1-&gt;2)-alpha-D-Man-(1-&gt;2)](n)-alpha-D-Man-(1-&gt;3)-alpha-D-Man-(1-&gt;3)-alpha-D-Man-(1-&gt;3)-alpha-D-GlcNAc-di-trans,octa-cis-undecaprenyl diphosphate + 2 GDP-alpha-D-mannose = [alpha-D-Man-(1-&gt;3)-alpha-D-Man-(1-&gt;3)-alpha-D-Man-(1-&gt;2)-alpha-D-Man-(1-&gt;2)](n+1)-alpha-D-Man-(1-&gt;3)-alpha-D-Man-(1-&gt;3)-alpha-D-Man-(1-&gt;3)-alpha-D-GlcNAc-di-trans,octa-cis-undecaprenyl diphosphate + 2 GDP + 2 H(+). It functions in the pathway bacterial outer membrane biogenesis; LPS O-antigen biosynthesis. Mannosyltransferase involved in the biosynthesis of the repeat unit of the lipopolysaccharide (LPS) O-antigen region. Catalyzes the polymerization of a tetrasaccharide repeat unit containing two alpha-(1-&gt;3)- and two alpha-(1-&gt;2)-linked mannopyranose residues. The sequence is that of Serotype-specific mannosyltransferase WbdA from Escherichia coli.